Here is a 50-residue protein sequence, read N- to C-terminus: Basic phospholipase A2 Bmaj-9 (50 aa).

3 residues coordinate Ca(2+): Tyr27, Gly29, and Gly31. Cys28 and Cys45 are disulfide-bonded. Residue His48 is part of the active site. Residue Asp49 coordinates Ca(2+).

This sequence belongs to the phospholipase A2 family. Group II subfamily. D49 sub-subfamily. Requires Ca(2+) as cofactor. Expressed by the venom gland.

The protein resides in the secreted. The enzyme catalyses a 1,2-diacyl-sn-glycero-3-phosphocholine + H2O = a 1-acyl-sn-glycero-3-phosphocholine + a fatty acid + H(+). Its function is as follows. Snake venom phospholipase A2 (PLA2) that causes irreversible neuromuscular blockade in chick biventer cervicis muscle preparations. The neuromuscular blockade is mediated by inhibitory action at the presynaptic motor nerve endings. PLA2 catalyzes the calcium-dependent hydrolysis of the 2-acyl groups in 3-sn-phosphoglycerides. The protein is Basic phospholipase A2 Bmaj-9 of Bothrops marajoensis (Marajo lancehead).